We begin with the raw amino-acid sequence, 593 residues long: NADH-quinone oxidoreductase subunit C/D (593 aa).

An NADH dehydrogenase I subunit C region spans residues 1-184; sequence MTADSALYIP…DPYSLSAAKQ (184 aa). The NADH dehydrogenase I subunit D stretch occupies residues 208–593; it reads DYMFLNLGPN…IDFVMADVDR (386 aa).

In the N-terminal section; belongs to the complex I 30 kDa subunit family. This sequence in the C-terminal section; belongs to the complex I 49 kDa subunit family. In terms of assembly, NDH-1 is composed of 13 different subunits. Subunits NuoB, CD, E, F, and G constitute the peripheral sector of the complex.

The protein localises to the cell inner membrane. The enzyme catalyses a quinone + NADH + 5 H(+)(in) = a quinol + NAD(+) + 4 H(+)(out). Functionally, NDH-1 shuttles electrons from NADH, via FMN and iron-sulfur (Fe-S) centers, to quinones in the respiratory chain. The immediate electron acceptor for the enzyme in this species is believed to be ubiquinone. Couples the redox reaction to proton translocation (for every two electrons transferred, four hydrogen ions are translocated across the cytoplasmic membrane), and thus conserves the redox energy in a proton gradient. The protein is NADH-quinone oxidoreductase subunit C/D of Pseudomonas paraeruginosa (strain DSM 24068 / PA7) (Pseudomonas aeruginosa (strain PA7)).